The chain runs to 305 residues: UDP-3-O-acyl-N-acetylglucosamine deacetylase (305 aa).

3 residues coordinate Zn(2+): H78, H237, and D241. Residue H264 is the Proton donor of the active site.

It belongs to the LpxC family. Zn(2+) serves as cofactor.

It carries out the reaction a UDP-3-O-[(3R)-3-hydroxyacyl]-N-acetyl-alpha-D-glucosamine + H2O = a UDP-3-O-[(3R)-3-hydroxyacyl]-alpha-D-glucosamine + acetate. The protein operates within glycolipid biosynthesis; lipid IV(A) biosynthesis; lipid IV(A) from (3R)-3-hydroxytetradecanoyl-[acyl-carrier-protein] and UDP-N-acetyl-alpha-D-glucosamine: step 2/6. Catalyzes the hydrolysis of UDP-3-O-myristoyl-N-acetylglucosamine to form UDP-3-O-myristoylglucosamine and acetate, the committed step in lipid A biosynthesis. The chain is UDP-3-O-acyl-N-acetylglucosamine deacetylase from Burkholderia thailandensis (strain ATCC 700388 / DSM 13276 / CCUG 48851 / CIP 106301 / E264).